Reading from the N-terminus, the 148-residue chain is Lysozyme C (148 aa).

The signal sequence occupies residues 1–18 (MRALIILGLVLLSVTVQG). The region spanning 19-148 (KIFERCELAR…VSQYVKGCGV (130 aa)) is the C-type lysozyme domain. Cystine bridges form between C24-C146, C48-C134, C83-C99, and C95-C113. Catalysis depends on residues E53 and D71.

The protein belongs to the glycosyl hydrolase 22 family. In terms of assembly, monomer.

It is found in the secreted. It carries out the reaction Hydrolysis of (1-&gt;4)-beta-linkages between N-acetylmuramic acid and N-acetyl-D-glucosamine residues in a peptidoglycan and between N-acetyl-D-glucosamine residues in chitodextrins.. Its function is as follows. Lysozymes have primarily a bacteriolytic function; those in tissues and body fluids are associated with the monocyte-macrophage system and enhance the activity of immunoagents. Also plays a role in digestion in this species. In Trachypithecus francoisi (Francois' leaf monkey), this protein is Lysozyme C (LYZ).